The primary structure comprises 556 residues: Formate--tetrahydrofolate ligase (556 aa).

An ATP-binding site is contributed by 65–72 (TPAGEGKT).

Belongs to the formate--tetrahydrofolate ligase family.

It carries out the reaction (6S)-5,6,7,8-tetrahydrofolate + formate + ATP = (6R)-10-formyltetrahydrofolate + ADP + phosphate. It functions in the pathway one-carbon metabolism; tetrahydrofolate interconversion. The protein is Formate--tetrahydrofolate ligase of Lachnoclostridium phytofermentans (strain ATCC 700394 / DSM 18823 / ISDg) (Clostridium phytofermentans).